We begin with the raw amino-acid sequence, 1499 residues long: Multidrug resistance protein CDR2 (1499 aa).

Residues 1 to 511 (MSTANTSLSQ…NFLRMKGDPS (511 aa)) are Cytoplasmic-facing. In terms of domain architecture, ABC transporter 1 spans 148–402 (FTTEAINKLK…FENMGWKCPQ (255 aa)). 6 helical membrane-spanning segments follow: residues 512-532 (IPLI…SVFF), 546-566 (GALF…ILSL), 596-616 (LPVK…MVNL), 621-641 (GNFF…SHMF), 660-680 (VFLL…YILG), and 763-783 (FGIT…LTEF). The Cytoplasmic portion of the chain corresponds to 784 to 1193 (NKGAMQKGEI…TIVQDWRSPG (410 aa)). Residues 857–1101 (FFWRDLTYQV…MINYFEKYGA (245 aa)) enclose the ABC transporter 2 domain. Residue 893–900 (GASGAGKT) participates in ATP binding. Transmembrane regions (helical) follow at residues 1194–1214 (YIYS…FSFF), 1229–1249 (AVFM…PYFV), 1279–1299 (IPFQ…PVGL), 1315–1335 (LMWM…QLAI), 1354–1374 (LCLM…FWIF), and 1465–1485 (FGIF…FYWL).

Belongs to the ABC transporter superfamily. ABCG family. PDR (TC 3.A.1.205) subfamily.

The protein resides in the membrane. Its function is as follows. Multidrug efflux transporter. Confers resistance to azole antifungal agents, to other antifungals (terbinafine, amorolfine) and to a variety of metabolic inhibitors. This Candida albicans (strain SC5314 / ATCC MYA-2876) (Yeast) protein is Multidrug resistance protein CDR2 (CDR2).